Here is a 91-residue protein sequence, read N- to C-terminus: C-C motif chemokine 5 (91 aa).

The N-terminal stretch at 1 to 23 is a signal peptide; it reads MKVSAAALCVILTTAALCVPASA. Intrachain disulfides connect cysteine 33-cysteine 57 and cysteine 34-cysteine 73.

The protein belongs to the intercrine beta (chemokine CC) family.

The protein localises to the secreted. Chemoattractant for blood monocytes, memory T-helper cells and eosinophils. Causes the release of histamine from basophils and activates eosinophils. May activate several chemokine receptors including CCR1, CCR3, CCR4 and CCR5. May also be an agonist of the G protein-coupled receptor GPR75. Together with GPR75, may play a role in neuron survival through activation of a downstream signaling pathway involving the PI3, Akt and MAP kinases. By activating GPR75 may also play a role in insulin secretion by islet cells. This Cavia porcellus (Guinea pig) protein is C-C motif chemokine 5 (CCL5).